The following is a 1028-amino-acid chain: Carbamoyl phosphate synthase large chain (1028 aa).

Residues 1–409 (MPPRRDLKKI…ALMKALRGLE (409 aa)) are carboxyphosphate synthetic domain. ATP contacts are provided by arginine 129, arginine 169, glycine 175, glycine 176, glutamate 208, valine 210, glutamate 215, glycine 241, valine 242, histidine 243, glutamine 285, and glutamate 299. Positions 133–328 (QEAMRRIDLE…IAKIAALLAV (196 aa)) constitute an ATP-grasp 1 domain. Positions 285, 299, and 301 each coordinate Mg(2+). Residues glutamine 285, glutamate 299, and asparagine 301 each coordinate Mn(2+). Residues 410-549 (RDVRALAGVR…YSTYELEDEV (140 aa)) are oligomerization domain. The interval 550–933 (WPSQKPKVVI…AYYKAELGAG (384 aa)) is carbamoyl phosphate synthetic domain. An ATP-grasp 2 domain is found at 674-866 (HALCQRLGIP…LAKLAALIAV (193 aa)). ATP contacts are provided by arginine 710, arginine 750, leucine 752, glutamate 757, glycine 782, valine 783, histidine 784, serine 785, glutamine 825, and glutamate 837. 3 residues coordinate Mg(2+): glutamine 825, glutamate 837, and asparagine 839. The Mn(2+) site is built by glutamine 825, glutamate 837, and asparagine 839. Residues 934–1028 (QRLPLSGQVR…QDWHQKAPRG (95 aa)) form the MGS-like domain. Positions 934-1028 (QRLPLSGQVR…QDWHQKAPRG (95 aa)) are allosteric domain.

It belongs to the CarB family. In terms of assembly, composed of two chains; the small (or glutamine) chain promotes the hydrolysis of glutamine to ammonia, which is used by the large (or ammonia) chain to synthesize carbamoyl phosphate. Tetramer of heterodimers (alpha,beta)4. Mg(2+) is required as a cofactor. Requires Mn(2+) as cofactor.

The catalysed reaction is hydrogencarbonate + L-glutamine + 2 ATP + H2O = carbamoyl phosphate + L-glutamate + 2 ADP + phosphate + 2 H(+). The enzyme catalyses hydrogencarbonate + NH4(+) + 2 ATP = carbamoyl phosphate + 2 ADP + phosphate + 2 H(+). The protein operates within amino-acid biosynthesis; L-arginine biosynthesis; carbamoyl phosphate from bicarbonate: step 1/1. It functions in the pathway pyrimidine metabolism; UMP biosynthesis via de novo pathway; (S)-dihydroorotate from bicarbonate: step 1/3. Functionally, large subunit of the glutamine-dependent carbamoyl phosphate synthetase (CPSase). CPSase catalyzes the formation of carbamoyl phosphate from the ammonia moiety of glutamine, carbonate, and phosphate donated by ATP, constituting the first step of 2 biosynthetic pathways, one leading to arginine and/or urea and the other to pyrimidine nucleotides. The large subunit (synthetase) binds the substrates ammonia (free or transferred from glutamine from the small subunit), hydrogencarbonate and ATP and carries out an ATP-coupled ligase reaction, activating hydrogencarbonate by forming carboxy phosphate which reacts with ammonia to form carbamoyl phosphate. The polypeptide is Carbamoyl phosphate synthase large chain (Thermus thermophilus (strain ATCC BAA-163 / DSM 7039 / HB27)).